Reading from the N-terminus, the 1250-residue chain is DNA excision repair protein ERCC-6-like (1250 aa).

Phosphoserine is present on Ser14. The TPR 1 repeat unit spans residues 21–54 (YLRYVKEAKEATKNGDLEEAFKLFNLAKDIFPNE). Residues 109–277 (SLYRDGRKGG…WSLFDFACQG (169 aa)) enclose the Helicase ATP-binding domain. 122-129 (DDMGLGKT) is an ATP binding site. The DEAH box motif lies at 228-231 (DEAH). The region spanning 464 to 620 (FLMDLLKRLR…EKKNPFRYFS (157 aa)) is the Helicase C-terminal domain. The interval 735–768 (VFPSSTKKKCPKLNKPQPQPSPLLSTHHTQEEDI) is disordered. Phosphoserine is present on residues Ser755, Ser774, Ser807, and Ser810. Thr813 is modified (phosphothreonine). Ser820 bears the Phosphoserine mark. The interval 926 to 946 (SALQDAQASEAKLEEEPSASS) is disordered. Phosphoserine occurs at positions 969, 971, 995, 1004, and 1028. Residues 1061-1092 (ASTPKNDISPPGRFFSSQIPSSVNKSMNSRRS) are disordered. Phosphothreonine; by PLK1 is present on Thr1063. Ser1069 carries the post-translational modification Phosphoserine. Positions 1075 to 1087 (FSSQIPSSVNKSM) are enriched in polar residues. Residues Ser1098 and Ser1118 each carry the phosphoserine modification. Residues 1110 to 1199 (MEERLDDSSE…QDKAAEATND (90 aa)) are disordered. Over residues 1115–1124 (DDSSEAKGPE) the composition is skewed to basic and acidic residues. Positions 1125-1135 (DYPEEGVEESS) are enriched in acidic residues. Residues 1149 to 1173 (ETLSSENKSSWLMTSKPSALAQETS) show a composition bias toward polar residues. Phosphoserine is present on residues Ser1181 and Ser1188. A TPR 2 repeat occupies 1200–1233 (YETLVKRGKELKECGKIQEALNCLVKALDIKSAD).

It belongs to the SNF2/RAD54 helicase family. Interacts with PLK1, which phosphorylates it. Both proteins are mutually dependent on each other for correct subcellular localization. Interacts (via N-terminal TPR repeat) with BEND3 (via BEN domains 1 and 3); the interaction is direct. Post-translationally, phosphorylation by PLK1 prevents the association with chromosome arms and restricts its localization to the kinetochore-centromere region.

The protein resides in the chromosome. It is found in the centromere. Its subcellular location is the kinetochore. It catalyses the reaction ATP + H2O = ADP + phosphate + H(+). Functionally, DNA helicase that acts as a tension sensor that associates with catenated DNA which is stretched under tension until it is resolved during anaphase. Functions as ATP-dependent DNA translocase. Can promote Holliday junction branch migration (in vitro). This Homo sapiens (Human) protein is DNA excision repair protein ERCC-6-like (ERCC6L).